Here is a 349-residue protein sequence, read N- to C-terminus: Flap endonuclease 1 (349 aa).

The interval 1–102 (MGVTELGKLI…AEIEARRRVK (102 aa)) is N-domain. Residues Asp-31, Asp-84, Glu-156, Glu-158, Asp-177, Asp-179, and Asp-239 each contribute to the Mg(2+) site. The I-domain stretch occupies residues 120–261 (DVAKYMKRVI…KALKLVLEFG (142 aa)).

This sequence belongs to the XPG/RAD2 endonuclease family. FEN1 subfamily. As to quaternary structure, interacts with PCNA. PCNA stimulates the nuclease activity without altering cleavage specificity. The cofactor is Mg(2+).

Its function is as follows. Structure-specific nuclease with 5'-flap endonuclease and 5'-3' exonuclease activities involved in DNA replication and repair. During DNA replication, cleaves the 5'-overhanging flap structure that is generated by displacement synthesis when DNA polymerase encounters the 5'-end of a downstream Okazaki fragment. Binds the unpaired 3'-DNA end and kinks the DNA to facilitate 5' cleavage specificity. Cleaves one nucleotide into the double-stranded DNA from the junction in flap DNA, leaving a nick for ligation. Also involved in the base excision repair (BER) pathway. Acts as a genome stabilization factor that prevents flaps from equilibrating into structures that lead to duplications and deletions. Also possesses 5'-3' exonuclease activity on nicked or gapped double-stranded DNA. The sequence is that of Flap endonuclease 1 from Pyrobaculum neutrophilum (strain DSM 2338 / JCM 9278 / NBRC 100436 / V24Sta) (Thermoproteus neutrophilus).